Here is a 300-residue protein sequence, read N- to C-terminus: 4-diphosphocytidyl-2-C-methyl-D-erythritol kinase (300 aa).

Lys-12 is a catalytic residue. Residue 94–104 (PAQAGIGGGSS) coordinates ATP. Asp-136 is an active-site residue.

It belongs to the GHMP kinase family. IspE subfamily.

It carries out the reaction 4-CDP-2-C-methyl-D-erythritol + ATP = 4-CDP-2-C-methyl-D-erythritol 2-phosphate + ADP + H(+). Its pathway is isoprenoid biosynthesis; isopentenyl diphosphate biosynthesis via DXP pathway; isopentenyl diphosphate from 1-deoxy-D-xylulose 5-phosphate: step 3/6. Its function is as follows. Catalyzes the phosphorylation of the position 2 hydroxy group of 4-diphosphocytidyl-2C-methyl-D-erythritol. The chain is 4-diphosphocytidyl-2-C-methyl-D-erythritol kinase from Verminephrobacter eiseniae (strain EF01-2).